A 105-amino-acid chain; its full sequence is Co-chaperonin GroES 3 (105 aa).

This sequence belongs to the GroES chaperonin family. As to quaternary structure, heptamer of 7 subunits arranged in a ring. Interacts with the chaperonin GroEL.

The protein localises to the cytoplasm. Functionally, together with the chaperonin GroEL, plays an essential role in assisting protein folding. The GroEL-GroES system forms a nano-cage that allows encapsulation of the non-native substrate proteins and provides a physical environment optimized to promote and accelerate protein folding. GroES binds to the apical surface of the GroEL ring, thereby capping the opening of the GroEL channel. This chain is Co-chaperonin GroES 3, found in Rhizobium meliloti (strain 1021) (Ensifer meliloti).